Here is a 200-residue protein sequence, read N- to C-terminus: Mpv17-like protein 2 (200 aa).

The next 3 helical transmembrane spans lie at 24–40 (ALLLTNTLGCGVLMAAG), 63–83 (ASMFAVGCSMGPFLHFWYLWL), and 102–122 (VLVDQTVASPILGVWYFLGLG).

This sequence belongs to the peroxisomal membrane protein PXMP2/4 family. As to quaternary structure, interacts with the large mitochondrial ribosomal subunit.

It is found in the membrane. The protein localises to the mitochondrion inner membrane. Required for the assembly and stability of the mitochondrial ribosome. Is a positive regulator of mitochondrial protein synthesis. This Mus musculus (Mouse) protein is Mpv17-like protein 2 (Mpv17l2).